Consider the following 272-residue polypeptide: Prohibitin 1 (272 aa).

A coiled-coil region spans residues 177–211; the sequence is KEFTEAVEMKQVAQQEAERARFIVEKAEQQKKAAV.

The mitochondrial prohibitin complex consists of two subunits (PHB1 and PHB2), assembled into a membrane-associated ring-shaped supercomplex of approximately 1 mDa.

Its subcellular location is the mitochondrion inner membrane. It is found in the nucleus. It localises to the cytoplasm. The protein localises to the cell membrane. In terms of biological role, protein with pleiotropic attributes mediated in a cell-compartment- and tissue-specific manner, which include the plasma membrane-associated cell signaling functions, mitochondrial chaperone, and transcriptional co-regulator of transcription factors in the nucleus. In the mitochondria, together with PHB2, forms large ring complexes (prohibitin complexes) in the inner mitochondrial membrane (IMM) and functions as a chaperone protein that stabilizes mitochondrial respiratory enzymes and maintains mitochondrial integrity in the IMM, which is required for mitochondrial morphogenesis, neuronal survival, and normal lifespan. Functionally, in the nucleus, acts as a transcription coregulator, enhances promoter binding by TP53, a transcription factor it activates, but reduces the promoter binding by E2F1, a transcription factor it represses. Its function is as follows. In the plasma membrane, cooperates with CD86 to mediate CD86-signaling in B lymphocytes that regulates the level of IgG1 produced through the activation of distal signaling intermediates. Upon CD40 engagement, required to activate NF-kappa-B signaling pathway via phospholipase C and protein kinase C activation. The protein is Prohibitin 1 (PHB1) of Gallus gallus (Chicken).